Reading from the N-terminus, the 583-residue chain is Septin-9 (583 aa).

Methionine 1 carries the N-acetylmethionine modification. The span at 1–14 (MKKSYSGVTRTSSG) shows a compositional bias: polar residues. The interval 1-49 (MKKSYSGVTRTSSGRLRRLADPTGPALKRSFEVEEIEPPNSTPPRRVQT) is disordered. Residue serine 30 is modified to Phosphoserine. A phosphothreonine mark is found at threonine 42 and threonine 49. Lysine 62 bears the N6-acetyllysine mark. Residues 79-105 (DSLSQRSPKPSLRRVELAGAKAPEPMS) are disordered. Residues serine 82, serine 85, and serine 89 each carry the phosphoserine modification. The residue at position 143 (threonine 143) is a Phosphothreonine. The tract at residues 166–252 (VETPASKIPE…TPSCVGDMAD (87 aa)) is disordered. Positions 204–221 (LPSQTLENSEAPMSQLQS) are enriched in polar residues. Tyrosine 276 carries the phosphotyrosine modification. The 273-residue stretch at 293–565 (QGFEFNIMVV…EAYRVKRLNE (273 aa)) folds into the Septin-type G domain. The G1 motif stretch occupies residues 303–310 (GQSGLGKS). Position 303–310 (303–310 (GQSGLGKS)) interacts with GTP. Serine 325 and serine 330 each carry phosphoserine. Residues threonine 337, glycine 363, 443 to 451 (KADTLTLEE), glycine 499, and arginine 514 contribute to the GTP site. A G3 motif region spans residues 360-363 (DTPG). The interval 442-445 (AKAD) is G4 motif.

It belongs to the TRAFAC class TrmE-Era-EngA-EngB-Septin-like GTPase superfamily. Septin GTPase family. Septins polymerize into heterooligomeric protein complexes that form filaments, and associate with cellular membranes, actin filaments, and microtubules. GTPase activity is required for filament formation. Interacts with SEPTIN2, SEPTIN6, SEPTIN7, SEPTIN11 and SEPTIN14. Interacts with RTKN and ARHGEF18. Expressed in all tissues examined except muscle. Isoforms are differentially expressed in testes, kidney, liver, heart, spleen and brain.

Its subcellular location is the cytoplasm. It localises to the cytoskeleton. Filament-forming cytoskeletal GTPase. May play a role in cytokinesis (Potential). In Mus musculus (Mouse), this protein is Septin-9.